A 249-amino-acid polypeptide reads, in one-letter code: ATP synthase subunit a, chloroplastic (249 aa).

5 helical membrane-spanning segments follow: residues 40–60 (QVLITSWVVIAILLGSAVIAI), 97–117 (VPFIGTLFLFIFVSNWSGALL), 136–156 (INTTVALALLTSVAYFYAGLS), 201–221 (LVVVVLVSLVPLVVPIPVMFL), and 222–242 (GLFTSGIQALIFATLAAAYIG).

The protein belongs to the ATPase A chain family. As to quaternary structure, F-type ATPases have 2 components, CF(1) - the catalytic core - and CF(0) - the membrane proton channel. CF(1) has five subunits: alpha(3), beta(3), gamma(1), delta(1), epsilon(1). CF(0) has four main subunits: a, b, b' and c.

It localises to the plastid. The protein localises to the chloroplast thylakoid membrane. In terms of biological role, key component of the proton channel; it plays a direct role in the translocation of protons across the membrane. This is ATP synthase subunit a, chloroplastic from Barbarea verna (Land cress).